Consider the following 114-residue polypeptide: Dolichyl-diphosphooligosaccharide--protein glycosyltransferase subunit DAD1 (114 aa).

Residues 1 to 30 are Cytoplasmic-facing; that stretch reads MPKAAGDAKLLIQSLNKAYAATPTNLKIID. A helical transmembrane segment spans residues 31–51; the sequence is LYVVFAVVTALLQVVYMGIVG. Position 52 (Ser52) is a topological domain, lumenal. The chain crosses the membrane as a helical span at residues 53–73; sequence FPFNSFLSGVLSCIGTAVLAV. Over 74–93 the chain is Cytoplasmic; the sequence is CHRIQVNKDNKEFKDLAPER. The helical transmembrane segment at 94–114 threads the bilayer; it reads AFADFVLCSLVLHLVIMNFLG.

It belongs to the DAD/OST2 family. In terms of assembly, component of the oligosaccharyltransferase (OST) complex.

The protein resides in the endoplasmic reticulum membrane. Its pathway is protein modification; protein glycosylation. In terms of biological role, subunit of the oligosaccharyl transferase (OST) complex that catalyzes the initial transfer of a defined glycan (Glc(3)Man(9)GlcNAc(2) in eukaryotes) from the lipid carrier dolichol-pyrophosphate to an asparagine residue within an Asn-X-Ser/Thr consensus motif in nascent polypeptide chains, the first step in protein N-glycosylation. N-glycosylation occurs cotranslationally and the complex associates with the Sec61 complex at the channel-forming translocon complex that mediates protein translocation across the endoplasmic reticulum (ER). All subunits are required for a maximal enzyme activity. The sequence is that of Dolichyl-diphosphooligosaccharide--protein glycosyltransferase subunit DAD1 (DAD1) from Hordeum vulgare (Barley).